The sequence spans 203 residues: Imidazoleglycerol-phosphate dehydratase (203 aa).

It belongs to the imidazoleglycerol-phosphate dehydratase family.

Its subcellular location is the cytoplasm. It carries out the reaction D-erythro-1-(imidazol-4-yl)glycerol 3-phosphate = 3-(imidazol-4-yl)-2-oxopropyl phosphate + H2O. It participates in amino-acid biosynthesis; L-histidine biosynthesis; L-histidine from 5-phospho-alpha-D-ribose 1-diphosphate: step 6/9. The sequence is that of Imidazoleglycerol-phosphate dehydratase from Deinococcus geothermalis (strain DSM 11300 / CIP 105573 / AG-3a).